The chain runs to 262 residues: Snake venom serine protease catroxase-1 (262 aa).

Positions 1–18 (MVLIRVLANLLILQLSYA) are cleaved as a signal peptide. Residues 19 to 24 (QKSSEP) constitute a propeptide that is removed on maturation. Positions 25-250 (IIGGDECNRN…HLDWIQSIIA (226 aa)) constitute a Peptidase S1 domain. Intrachain disulfides connect cysteine 31/cysteine 162, cysteine 49/cysteine 65, cysteine 97/cysteine 257, cysteine 141/cysteine 211, cysteine 173/cysteine 190, and cysteine 201/cysteine 226. Histidine 64 functions as the Charge relay system in the catalytic mechanism. N-linked (GlcNAc...) asparagine glycosylation is present at asparagine 102. The Charge relay system role is filled by aspartate 109. Asparagine 169 is a glycosylation site (N-linked (GlcNAc...) asparagine). Catalysis depends on serine 205, which acts as the Charge relay system.

The protein belongs to the peptidase S1 family. Snake venom subfamily. As to quaternary structure, monomer. Expressed by the venom gland.

Its subcellular location is the secreted. Its function is as follows. Snake venom serine protease that may act in the hemostasis system of the prey. The chain is Snake venom serine protease catroxase-1 from Crotalus atrox (Western diamondback rattlesnake).